The chain runs to 174 residues: Inactive protein RESTRICTED TEV MOVEMENT 1 (174 aa).

Residues 1–152 form the Jacalin-type lectin domain; it reads MKIGPVGKHD…LQYIGVYLRP (152 aa).

The protein belongs to the jacalin lectin family. Self-interacts. Interacts with RTM3.

It is found in the cytoplasm. Unable to mediate restriction of long-distance movement of the pathogenic tobacco etch virus (TEV) without causing a hypersensitive response or inducing systemic acquired resistance. The protein is Inactive protein RESTRICTED TEV MOVEMENT 1 (RTM1) of Arabidopsis thaliana (Mouse-ear cress).